A 712-amino-acid polypeptide reads, in one-letter code: Ribosomal RNA large subunit methyltransferase K/L (712 aa).

The region spanning 46-157 is the THUMP domain; it reads GAYQALLHSR…RENMVVSLDL (112 aa).

Belongs to the methyltransferase superfamily. RlmKL family.

The protein resides in the cytoplasm. It catalyses the reaction guanosine(2445) in 23S rRNA + S-adenosyl-L-methionine = N(2)-methylguanosine(2445) in 23S rRNA + S-adenosyl-L-homocysteine + H(+). The catalysed reaction is guanosine(2069) in 23S rRNA + S-adenosyl-L-methionine = N(2)-methylguanosine(2069) in 23S rRNA + S-adenosyl-L-homocysteine + H(+). Specifically methylates the guanine in position 2445 (m2G2445) and the guanine in position 2069 (m7G2069) of 23S rRNA. In Actinobacillus pleuropneumoniae serotype 7 (strain AP76), this protein is Ribosomal RNA large subunit methyltransferase K/L.